The primary structure comprises 314 residues: Putative S-adenosyl-L-methionine-dependent methyltransferase MRA_3805 (314 aa).

Residues D132 and 161–162 contribute to the S-adenosyl-L-methionine site; that span reads DL.

Belongs to the UPF0677 family.

Its function is as follows. Exhibits S-adenosyl-L-methionine-dependent methyltransferase activity. The sequence is that of Putative S-adenosyl-L-methionine-dependent methyltransferase MRA_3805 from Mycobacterium tuberculosis (strain ATCC 25177 / H37Ra).